We begin with the raw amino-acid sequence, 238 residues long: Probable transcriptional regulatory protein CTA_0499 (238 aa).

Positions 1 to 21 are disordered; that stretch reads MAGHSKWANTKHRKERADHKK. The segment covering 9 to 21 has biased composition (basic residues); sequence NTKHRKERADHKK.

This sequence belongs to the TACO1 family.

It is found in the cytoplasm. This is Probable transcriptional regulatory protein CTA_0499 from Chlamydia trachomatis serovar A (strain ATCC VR-571B / DSM 19440 / HAR-13).